A 250-amino-acid chain; its full sequence is Phosphonates import ATP-binding protein PhnC (250 aa).

The 246-residue stretch at 2 to 247 (ILFNNVNKVW…KLDAQAMKKI (246 aa)) folds into the ABC transporter domain. Residue 35–42 (GLSGAGKT) coordinates ATP.

It belongs to the ABC transporter superfamily. Phosphonates importer (TC 3.A.1.9.1) family. As to quaternary structure, the complex is composed of two ATP-binding proteins (PhnC), two transmembrane proteins (PhnE) and a solute-binding protein (PhnD).

Its subcellular location is the cell membrane. The enzyme catalyses phosphonate(out) + ATP + H2O = phosphonate(in) + ADP + phosphate + H(+). Its function is as follows. Part of the ABC transporter complex PhnCDE involved in phosphonates import. Responsible for energy coupling to the transport system. The sequence is that of Phosphonates import ATP-binding protein PhnC from Mycoplasma capricolum subsp. capricolum (strain California kid / ATCC 27343 / NCTC 10154).